Reading from the N-terminus, the 137-residue chain is Small ribosomal subunit protein uS11 (137 aa).

Disordered stretches follow at residues 1–32 and 118–137; these read MPPK…AHIK and ISDV…RRRV. Positions 12–21 are enriched in basic residues; the sequence is KTQKSRRRDK.

Belongs to the universal ribosomal protein uS11 family. Part of the 30S ribosomal subunit. Interacts with proteins S7 and S18. Binds to IF-3.

Its function is as follows. Located on the platform of the 30S subunit, it bridges several disparate RNA helices of the 16S rRNA. Forms part of the Shine-Dalgarno cleft in the 70S ribosome. The sequence is that of Small ribosomal subunit protein uS11 from Nocardia farcinica (strain IFM 10152).